The sequence spans 833 residues: Leucine--tRNA ligase (833 aa).

The short motif at 41–52 (PYPSGAGLHVGH) is the 'HIGH' region element. Positions 610–614 (KMSKS) match the 'KMSKS' region motif. Lys613 contributes to the ATP binding site.

Belongs to the class-I aminoacyl-tRNA synthetase family.

Its subcellular location is the cytoplasm. The enzyme catalyses tRNA(Leu) + L-leucine + ATP = L-leucyl-tRNA(Leu) + AMP + diphosphate. This Streptococcus pyogenes serotype M1 protein is Leucine--tRNA ligase.